We begin with the raw amino-acid sequence, 314 residues long: Zinc-binding alcohol dehydrogenase domain-containing protein cipB (314 aa).

Belongs to the zinc-containing alcohol dehydrogenase family.

In terms of biological role, involved in osmoadaptation. This Emericella nidulans (strain FGSC A4 / ATCC 38163 / CBS 112.46 / NRRL 194 / M139) (Aspergillus nidulans) protein is Zinc-binding alcohol dehydrogenase domain-containing protein cipB (cipB).